A 1288-amino-acid chain; its full sequence is Contactin-associated protein-like 3 (1288 aa).

The N-terminal stretch at 1–25 (MASVAWAVLKVLLLLPTQTWSPVGA) is a signal peptide. Residues 26–1245 (GNPPDCDAPL…LVNADRRDSA (1220 aa)) are Extracellular-facing. An F5/8 type C domain is found at 31–177 (CDAPLASALP…IGMRIEVYGC (147 aa)). Residues cysteine 31 and cysteine 177 are joined by a disulfide bond. Laminin G-like domains follow at residues 183–364 (VVYF…SFSC) and 370–545 (VPVT…IDSC). N-linked (GlcNAc...) asparagine glycans are attached at residues asparagine 285, asparagine 359, asparagine 441, and asparagine 497. Cysteine 332 and cysteine 364 form a disulfide bridge. Disulfide bonds link cysteine 513-cysteine 545, cysteine 551-cysteine 562, cysteine 556-cysteine 571, and cysteine 573-cysteine 583. One can recognise an EGF-like 1 domain in the interval 551–583 (CLPSYCEHGGECSQSWDTFSCDCLGTGYTGETC). The Fibrinogen C-terminal domain maps to 584–792 (HSSLYEQSCE…LLCRGDQSFW (209 aa)). 2 N-linked (GlcNAc...) asparagine glycosylation sites follow: asparagine 623 and asparagine 706. The Laminin G-like 3 domain maps to 793 to 958 (NSASFNTETS…TVTPGVEPGC (166 aa)). Disulfide bonds link cysteine 931–cysteine 958, cysteine 962–cysteine 975, cysteine 969–cysteine 984, and cysteine 986–cysteine 996. One can recognise an EGF-like 2 domain in the interval 962–996 (CSTYGHLCRNGGRCREKRRGVTCDCAFSAYDGPFC). A Laminin G-like 4 domain is found at 1015–1203 (QEHYTLSENS…RGHVAPMARC (189 aa)). Asparagine 1023, asparagine 1073, and asparagine 1120 each carry an N-linked (GlcNAc...) asparagine glycan. Cysteine 1167 and cysteine 1203 are joined by a disulfide. Residues 1215–1236 (ELAPRLAGGAGRSGPADEGEPL) form a disordered region. A helical transmembrane segment spans residues 1246–1266 (VIGGVIAVVIFILLCITAIAI). At 1267–1288 (RIYQQRKLRKENESKVSKKEEC) the chain is on the cytoplasmic side.

The protein belongs to the neurexin family.

Its subcellular location is the cell membrane. The protein localises to the secreted. This is Contactin-associated protein-like 3 (CNTNAP3) from Homo sapiens (Human).